A 459-amino-acid chain; its full sequence is Mitochondrial distribution and morphology protein 34 (459 aa).

In terms of domain architecture, SMP-LTD spans 1 to 190 (MSFRFNEAVF…LPSLIFNTSQ (190 aa)). A compositionally biased stretch (basic and acidic residues) spans 338 to 347 (RSNSNDDNAK). The tract at residues 338–375 (RSNSNDDNAKPRRRKIKCKKTRTPSNLQSQGEQAVDDS) is disordered. The segment covering 348-359 (PRRRKIKCKKTR) has biased composition (basic residues).

This sequence belongs to the MDM34 family. As to quaternary structure, component of the ER-mitochondria encounter structure (ERMES) or MDM complex, composed of MMM1, MDM10, MDM12 and MDM34. Ubiquitinated by a SCF (SKP1-CUL1-F-box protein) E3 ubiquitin-protein ligase complex containing the F-box protein MDM30. Ubiquitination is important for mitochondrial integrity.

The protein localises to the mitochondrion outer membrane. In terms of biological role, component of the ERMES/MDM complex, which serves as a molecular tether to connect the endoplasmic reticulum (ER) and mitochondria. Components of this complex are involved in the control of mitochondrial shape and protein biogenesis, and function in nonvesicular lipid trafficking between the ER and mitochondria. MDM34 is required for the interaction of the ER-resident membrane protein MMM1 and the outer mitochondrial membrane-resident beta-barrel protein MDM10. This Saccharomyces cerevisiae (strain RM11-1a) (Baker's yeast) protein is Mitochondrial distribution and morphology protein 34.